The chain runs to 217 residues: ATP-binding protein BexA (217 aa).

The ABC transporter domain maps to 2-217 (IRVNNVCKKY…AYQYYNETQK (216 aa)). 38 to 45 (GRNGAGKS) serves as a coordination point for ATP.

The protein belongs to the ABC transporter superfamily.

The protein resides in the cell inner membrane. Functionally, putative ATP-binding protein, and an energy-coupling component of capsule polysaccharide export apparatus. This Haemophilus influenzae protein is ATP-binding protein BexA (bexA).